The following is a 303-amino-acid chain: Ribose-5-phosphate isomerase (303 aa).

Gly residues predominate over residues 22–33; that stretch reads AGGAASGGGGNN. The interval 22–75 is disordered; the sequence is AGGAASGGGGNNWGLSGSHVQLPGRAHSETRGDKGGSSAGGPAPSTMSKAEEAK. Arginine 52 is modified (omega-N-methylarginine). Serine 99 carries the post-translational modification Phosphoserine.

The protein belongs to the ribose 5-phosphate isomerase family. In terms of tissue distribution, widely expressed, with highest levels in testis.

The enzyme catalyses aldehydo-D-ribose 5-phosphate = D-ribulose 5-phosphate. The protein operates within carbohydrate degradation; pentose phosphate pathway; D-ribose 5-phosphate from D-ribulose 5-phosphate (non-oxidative stage): step 1/1. In Mus musculus (Mouse), this protein is Ribose-5-phosphate isomerase (Rpia).